We begin with the raw amino-acid sequence, 368 residues long: UDP-N-acetylglucosamine--N-acetylmuramyl-(pentapeptide) pyrophosphoryl-undecaprenol N-acetylglucosamine transferase (368 aa).

UDP-N-acetyl-alpha-D-glucosamine contacts are provided by residues 10–12 (TGG), N128, R170, S199, I250, and Q295.

It belongs to the glycosyltransferase 28 family. MurG subfamily.

The protein localises to the cell inner membrane. It catalyses the reaction di-trans,octa-cis-undecaprenyl diphospho-N-acetyl-alpha-D-muramoyl-L-alanyl-D-glutamyl-meso-2,6-diaminopimeloyl-D-alanyl-D-alanine + UDP-N-acetyl-alpha-D-glucosamine = di-trans,octa-cis-undecaprenyl diphospho-[N-acetyl-alpha-D-glucosaminyl-(1-&gt;4)]-N-acetyl-alpha-D-muramoyl-L-alanyl-D-glutamyl-meso-2,6-diaminopimeloyl-D-alanyl-D-alanine + UDP + H(+). The protein operates within cell wall biogenesis; peptidoglycan biosynthesis. Its function is as follows. Cell wall formation. Catalyzes the transfer of a GlcNAc subunit on undecaprenyl-pyrophosphoryl-MurNAc-pentapeptide (lipid intermediate I) to form undecaprenyl-pyrophosphoryl-MurNAc-(pentapeptide)GlcNAc (lipid intermediate II). The sequence is that of UDP-N-acetylglucosamine--N-acetylmuramyl-(pentapeptide) pyrophosphoryl-undecaprenol N-acetylglucosamine transferase from Chlorobium phaeovibrioides (strain DSM 265 / 1930) (Prosthecochloris vibrioformis (strain DSM 265)).